Consider the following 123-residue polypeptide: Protein Wnt-7a (123 aa).

S1 is lipidated: O-palmitoleoyl serine; by PORCN. A disordered linker region spans residues 33–61; the sequence is VEPVRASRNKRPTFLKIKKPLSYRKPMDT. An intrachain disulfide couples C89 to C104. A glycan (N-linked (GlcNAc...) asparagine) is linked at N90.

Belongs to the Wnt family. In terms of assembly, forms a soluble 1:1 complex with AFM; this prevents oligomerization and is required for prolonged biological activity. The complex with AFM may represent the physiological form in body fluids. Interacts with FZD5. Interacts with PORCN. Post-translationally, palmitoleoylation is required for efficient binding to frizzled receptors. Depalmitoleoylation leads to Wnt signaling pathway inhibition.

The protein resides in the secreted. It localises to the extracellular space. The protein localises to the extracellular matrix. Functionally, ligand for members of the frizzled family of seven transmembrane receptors that functions in the canonical Wnt/beta-catenin signaling pathway. Plays an important role in embryonic development, including dorsal versus ventral patterning during limb development, skeleton development and urogenital tract development. Required for central nervous system (CNS) angiogenesis and blood-brain barrier regulation. The polypeptide is Protein Wnt-7a (WNT7A) (Meleagris gallopavo (Wild turkey)).